The following is a 366-amino-acid chain: MPQPQQHTADYSSAAYEAQLQQKLIRLNQDFASFNLPEISVFRSPEKHFRMRTEFRIWHERGTAMYVMFSQTDKRPYPIREFPIGSERINQLMPELMALVNRHECLRHKLFQVEFLTSLSNQALITLVYHKPLDEEWISAATDLRKQLNVEIIGRSRKQKILLERDHIIECLKVNGREYRYQQVEGSFTQPNARVCEQMLSWAQEQTRHTGGDLLELYCGNGNFTLPLAQNFDRVLATEISKTSVDSALYNSRLNQVENLQIARMSSEEFTQAMDGVREFNRLKHISLNDYRFSTIFVDPPRAGLDPATCHLAQRFDNIVYISCNPETLKDNLQTLTQTHQICTFAAFDQFPYTHHLECGVLLQRR.

Residues Q190, Y218, N223, E239, and D299 each coordinate S-adenosyl-L-methionine. C324 (nucleophile) is an active-site residue. Catalysis depends on E358, which acts as the Proton acceptor.

This sequence belongs to the class I-like SAM-binding methyltransferase superfamily. RNA M5U methyltransferase family. TrmA subfamily.

It catalyses the reaction uridine(54) in tRNA + S-adenosyl-L-methionine = 5-methyluridine(54) in tRNA + S-adenosyl-L-homocysteine + H(+). The enzyme catalyses uridine(341) in tmRNA + S-adenosyl-L-methionine = 5-methyluridine(341) in tmRNA + S-adenosyl-L-homocysteine + H(+). Functionally, dual-specificity methyltransferase that catalyzes the formation of 5-methyluridine at position 54 (m5U54) in all tRNAs, and that of position 341 (m5U341) in tmRNA (transfer-mRNA). The sequence is that of tRNA/tmRNA (uracil-C(5))-methyltransferase from Cellvibrio japonicus (strain Ueda107) (Pseudomonas fluorescens subsp. cellulosa).